Reading from the N-terminus, the 482-residue chain is Glutamate--tRNA ligase (482 aa).

A 'HIGH' region motif is present at residues 10 to 20 (PSPTGFLHIGN). The short motif at 253 to 257 (KLSKR) is the 'KMSKS' region element. Lys-256 provides a ligand contact to ATP.

The protein belongs to the class-I aminoacyl-tRNA synthetase family. Glutamate--tRNA ligase type 1 subfamily. Monomer.

The protein localises to the cytoplasm. The catalysed reaction is tRNA(Glu) + L-glutamate + ATP = L-glutamyl-tRNA(Glu) + AMP + diphosphate. Catalyzes the attachment of glutamate to tRNA(Glu) in a two-step reaction: glutamate is first activated by ATP to form Glu-AMP and then transferred to the acceptor end of tRNA(Glu). This is Glutamate--tRNA ligase from Mesoplasma florum (strain ATCC 33453 / NBRC 100688 / NCTC 11704 / L1) (Acholeplasma florum).